Here is a 100-residue protein sequence, read N- to C-terminus: MPFLVALSGIISGVHDHSMTVRLDQQTRQRLQDIVKGGYRSANAAIVDAINKRWEALHDEQLDAAYAAAIHDNPAYPYESEAERSAARARRNARQQRSAQ.

Residues 77–100 (PYESEAERSAARARRNARQQRSAQ) are disordered.

As to quaternary structure, forms a complex with cognate toxin MazF4.

In terms of biological role, antitoxin component of a type II toxin-antitoxin (TA) system. Labile antitoxin that binds to cognate MazF4 toxin and counteracts its endoribonuclease activity. This is Probable antitoxin MazE4 (mazE4) from Mycobacterium tuberculosis (strain CDC 1551 / Oshkosh).